We begin with the raw amino-acid sequence, 340 residues long: S-adenosylmethionine:tRNA ribosyltransferase-isomerase (340 aa).

This sequence belongs to the QueA family. In terms of assembly, monomer.

The protein localises to the cytoplasm. The catalysed reaction is 7-aminomethyl-7-carbaguanosine(34) in tRNA + S-adenosyl-L-methionine = epoxyqueuosine(34) in tRNA + adenine + L-methionine + 2 H(+). The protein operates within tRNA modification; tRNA-queuosine biosynthesis. Functionally, transfers and isomerizes the ribose moiety from AdoMet to the 7-aminomethyl group of 7-deazaguanine (preQ1-tRNA) to give epoxyqueuosine (oQ-tRNA). The protein is S-adenosylmethionine:tRNA ribosyltransferase-isomerase of Campylobacter concisus (strain 13826).